Here is a 258-residue protein sequence, read N- to C-terminus: Acyl-[acyl-carrier-protein]--UDP-N-acetylglucosamine O-acyltransferase (258 aa).

The protein belongs to the transferase hexapeptide repeat family. LpxA subfamily. In terms of assembly, homotrimer.

The protein localises to the cytoplasm. It catalyses the reaction a (3R)-hydroxyacyl-[ACP] + UDP-N-acetyl-alpha-D-glucosamine = a UDP-3-O-[(3R)-3-hydroxyacyl]-N-acetyl-alpha-D-glucosamine + holo-[ACP]. It participates in glycolipid biosynthesis; lipid IV(A) biosynthesis; lipid IV(A) from (3R)-3-hydroxytetradecanoyl-[acyl-carrier-protein] and UDP-N-acetyl-alpha-D-glucosamine: step 1/6. Functionally, involved in the biosynthesis of lipid A, a phosphorylated glycolipid that anchors the lipopolysaccharide to the outer membrane of the cell. In Alkalilimnicola ehrlichii (strain ATCC BAA-1101 / DSM 17681 / MLHE-1), this protein is Acyl-[acyl-carrier-protein]--UDP-N-acetylglucosamine O-acyltransferase.